The sequence spans 154 residues: Proteinase inhibitor type-2 P303.51 (154 aa).

An N-terminal signal peptide occupies residues 1–25 (MAVHKEVNFVAYLLIVLGLLVLVSA). 2 tandem repeats follow at residues 31–87 (AKAC…DPKK) and 88–147 (PKAC…DEPK). 8 cysteine pairs are disulfide-bonded: cysteine 34–cysteine 122, cysteine 38–cysteine 118, cysteine 46–cysteine 128, cysteine 58–cysteine 95, cysteine 61–cysteine 79, cysteine 62–cysteine 91, cysteine 68–cysteine 104, and cysteine 121–cysteine 139.

It belongs to the protease inhibitor I20 (potato type II proteinase inhibitor) family.

This Solanum tuberosum (Potato) protein is Proteinase inhibitor type-2 P303.51.